The primary structure comprises 310 residues: Prephenate dehydratase (310 aa).

The Prephenate dehydratase domain occupies 3 to 190; that stretch reads RIAYLGPEGT…ARTRFVLVGL (188 aa). The 78-residue stretch at 204–281 folds into the ACT domain; that stretch reads AVVLRLVNEP…VDVRYLGSWP (78 aa).

Homodimer.

It carries out the reaction prephenate + H(+) = 3-phenylpyruvate + CO2 + H2O. It participates in amino-acid biosynthesis; L-phenylalanine biosynthesis; phenylpyruvate from prephenate: step 1/1. The polypeptide is Prephenate dehydratase (pheA) (Mycolicibacterium smegmatis (strain ATCC 700084 / mc(2)155) (Mycobacterium smegmatis)).